Reading from the N-terminus, the 64-residue chain is Conotoxin LiC121 (64 aa).

Residues 1 to 22 form the signal peptide; the sequence is MRCVPVFIILLLLSPSAPSVDA. Positions 23–48 are excised as a propeptide; it reads HPKTKDDVPLASFHDDAKRTLQRLWI.

The protein belongs to the conotoxin T superfamily. Post-translationally, contains 2 disulfide bonds that can be either 'C1-C3, C2-C4' or 'C1-C4, C2-C3', since these disulfide connectivities have been observed for conotoxins with cysteine framework V (for examples, see AC P0DQQ7 and AC P81755). As to expression, expressed by the venom duct.

Its subcellular location is the secreted. The chain is Conotoxin LiC121 from Conus lividus (Livid cone).